The sequence spans 415 residues: Nacrein-like protein C2 (415 aa).

N27 carries an N-linked (GlcNAc...) asparagine glycan. The 382-residue stretch at 33 to 414 (AGFSYDRSIC…KNKVTVYKSF (382 aa)) folds into the Alpha-carbonic anhydrase domain. 3 residues coordinate Zn(2+): H132, H134, and H157. A disordered region spans residues 201-297 (DEPDDEECKH…GENGHKHGCR (97 aa)). Over residues 207 to 219 (ECKHILKGHHPDN) the composition is skewed to basic and acidic residues. The span at 220 to 289 (NENGNGDNGN…NNGENGNNGE (70 aa)) shows a compositional bias: low complexity. 22 consecutive repeat copies span residues 225–227 (GDN), 228–230 (GNN), 231–233 (GYN), 234–236 (GDN), 237–239 (GNN), 240–242 (GDN), 243–245 (GNN), 246–248 (GYN), 249–251 (GDN), 252–254 (GNN), 255–257 (GVN), 258–260 (GNN), 261–263 (GYN), 264–266 (GDN), 267–269 (GNN), 270–272 (GDN), 273–275 (GNN), 276–278 (GEN), 279–281 (GNN), 282–284 (GEN), 285–286 (GN), and 288–290 (GEN). Residues 225–290 (GDNGNNGYNG…NGENGNNGEN (66 aa)) are 27 X 3 AA approximate tandem repeats of G-X-N. 355 to 356 (TT) lines the substrate pocket.

It belongs to the alpha-carbonic anhydrase family. Homooligomer; disulfide-linked. May also be disulfide-linked to insoluble organic matrix. Zn(2+) is required as a cofactor. Expressed in the mantle.

The protein resides in the secreted. It is found in the extracellular space. It localises to the extracellular matrix. It catalyses the reaction hydrogencarbonate + H(+) = CO2 + H2O. Functionally, acts as a negative regulator for calcification in the shells of mollusks. May function both as a calcium concentrator and as a carbonic anhydrase required for production of carbonate ions, which are assembled to CaCO(3) at mineralization sites. Is important for shell formation in both the calcitic prismatic layer and the aragonitic nacreous layer. Shows inhibitory activity of crystal formation when present in free state but, when attached to the insoluble matrix, may regulate the form and size of aragonite crystal. The protein is Nacrein-like protein C2 of Crassostrea nippona (Iwagaki oyster).